The primary structure comprises 323 residues: Lipoyl synthase (323 aa).

The [4Fe-4S] cluster site is built by Cys65, Cys70, Cys76, Cys91, Cys95, Cys98, and Ser304. Residues 77–293 (FNNGTATFMI…KKEALSIGFT (217 aa)) enclose the Radical SAM core domain.

Belongs to the radical SAM superfamily. Lipoyl synthase family. [4Fe-4S] cluster serves as cofactor.

The protein localises to the cytoplasm. It carries out the reaction [[Fe-S] cluster scaffold protein carrying a second [4Fe-4S](2+) cluster] + N(6)-octanoyl-L-lysyl-[protein] + 2 oxidized [2Fe-2S]-[ferredoxin] + 2 S-adenosyl-L-methionine + 4 H(+) = [[Fe-S] cluster scaffold protein] + N(6)-[(R)-dihydrolipoyl]-L-lysyl-[protein] + 4 Fe(3+) + 2 hydrogen sulfide + 2 5'-deoxyadenosine + 2 L-methionine + 2 reduced [2Fe-2S]-[ferredoxin]. It functions in the pathway protein modification; protein lipoylation via endogenous pathway; protein N(6)-(lipoyl)lysine from octanoyl-[acyl-carrier-protein]: step 2/2. Catalyzes the radical-mediated insertion of two sulfur atoms into the C-6 and C-8 positions of the octanoyl moiety bound to the lipoyl domains of lipoate-dependent enzymes, thereby converting the octanoylated domains into lipoylated derivatives. This Buchnera aphidicola subsp. Acyrthosiphon pisum (strain APS) (Acyrthosiphon pisum symbiotic bacterium) protein is Lipoyl synthase.